A 508-amino-acid polypeptide reads, in one-letter code: Pancreatic alpha-amylase (508 aa).

The N-terminal stretch at 1 to 15 (MKFVLLLSLIGFCWA) is a signal peptide. Gln-16 is modified (pyrrolidone carboxylic acid). Cystine bridges form between Cys-43-Cys-101, Cys-85-Cys-130, and Cys-156-Cys-172. Ca(2+) contacts are provided by Asn-115, Arg-170, and Asp-179. Position 207 (Arg-207) interacts with chloride. Residue Asp-209 is the Nucleophile of the active site. His-213 is a Ca(2+) binding site. The Proton donor role is filled by Glu-245. The chloride site is built by Asn-310 and Arg-349. 2 disulfides stabilise this stretch: Cys-390–Cys-396 and Cys-462–Cys-474.

Belongs to the glycosyl hydrolase 13 family. Monomer. Ca(2+) is required as a cofactor. It depends on chloride as a cofactor.

The protein resides in the secreted. It is found in the extracellular space. The catalysed reaction is Endohydrolysis of (1-&gt;4)-alpha-D-glucosidic linkages in polysaccharides containing three or more (1-&gt;4)-alpha-linked D-glucose units.. The polypeptide is Pancreatic alpha-amylase (Amy2) (Rattus norvegicus (Rat)).